Here is a 248-residue protein sequence, read N- to C-terminus: E3 SUMO-protein ligase NSE2 (248 aa).

An N-acetylmethionine modification is found at M1. Residues K92 and K109 each participate in a glycyl lysine isopeptide (Lys-Gly) (interchain with G-Cter in SUMO2) cross-link. S118 is subject to Phosphoserine. Glycyl lysine isopeptide (Lys-Gly) (interchain with G-Cter in SUMO2) cross-links involve residues K127 and K132. Residues 156–242 (VDEDMIVTQS…LRRAIESHKK (87 aa)) form an SP-RING-type zinc finger. Residues C187, H189, C212, and C217 each contribute to the Zn(2+) site.

It belongs to the NSE2 family. In terms of assembly, component of the SMC5-SMC6 complex which consists at least of SMC5, SMC6, NSMCE2, NSMCE1, NSMCE4A or EID3 and NSMCE3. In terms of processing, sumoylated, possibly via autosumoylation.

Its subcellular location is the nucleus. It is found in the chromosome. The protein resides in the telomere. It localises to the PML body. The protein operates within protein modification; protein sumoylation. E3 SUMO-protein ligase component of the SMC5-SMC6 complex, a complex involved in DNA double-strand break repair by homologous recombination. Is not be required for the stability of the complex. The complex may promote sister chromatid homologous recombination by recruiting the SMC1-SMC3 cohesin complex to double-strand breaks. Acts as an E3 ligase mediating SUMO attachment to various proteins such as SMC6L1 and TSNAX, the shelterin complex subunits TERF1, TERF2, TINF2 and TERF2IP, RAD51AP1, and maybe the cohesin components RAD21 and STAG2. Required for recruitment of telomeres to PML nuclear bodies. Required for sister chromatid cohesion during prometaphase and mitotic progression. The polypeptide is E3 SUMO-protein ligase NSE2 (NSMCE2) (Bos taurus (Bovine)).